Consider the following 134-residue polypeptide: Ribonuclease VapC2 (134 aa).

The PINc domain maps to 3–124; the sequence is YMLDTNICVY…TNNIKEFKRI (122 aa). Asp-6 is a Mg(2+) binding site.

The protein belongs to the PINc/VapC protein family. As to quaternary structure, forms complexes with VapB2; probably VapC2(4):VapB2(2) in the absence of DNA, and VapC2(4):VapB2(4) in the presence of DNA. Crystallizes as heterodimers with stoichiometry VapC2(4):VapB2(4) in the presence of its probable promoter DNA. The heterodimers are in contact via alternative VapC-VapC and VapB-VapB interactions. This subunit does not contact DNA. Requires Mg(2+) as cofactor.

In terms of biological role, toxic component of a type II toxin-antitoxin (TA) system. Has ssRNase activity. Upon expression in E.coli or S.cerevisiae inhibits growth in liquid culture; in S.cerevisiae its expression leads to apoptosis-like characteristics. Rapidly induces apoptosis (within 2 hours) upon microinjection into mouse fibroblasts (L929 line); pretreatment of cells with dexamethasone protects them. Probably contributes to host cell death if bacterial cell lysis occurs during host infection. Its toxic effect is neutralized by coexpression with cognate antitoxin VapB2, its RNase activity is partially inhibited in vitro by VapB2. The polypeptide is Ribonuclease VapC2 (Rickettsia felis (strain ATCC VR-1525 / URRWXCal2) (Rickettsia azadi)).